Here is an 862-residue protein sequence, read N- to C-terminus: Solute carrier family 4 member 11 (862 aa).

The Cytoplasmic portion of the chain corresponds to 1–343; the sequence is MSQNEHCQDS…IIGKSKSVGK (343 aa). The chain crosses the membrane as a helical span at residues 344 to 366; sequence YVTTTLFLYFACLLPTIAFGSLN. At 367–379 the chain is on the extracellular side; that stretch reads DENTNGAIDVQKT. Residues 380–393 form a helical membrane-spanning segment; the sequence is IAGQSIGGLLYALF. Over 394–398 the chain is Cytoplasmic; sequence SGQPL. Residues 399–415 traverse the membrane as a helical segment; sequence VILLTTAPLAIYTQVIR. The Extracellular portion of the chain corresponds to 416–428; the sequence is VICDDYNLDFNAF. The chain crosses the membrane as a helical span at residues 429-452; it reads YAWTGLWNSFFLALYAFLNLSLLM. Residues 453 to 460 lie on the Cytoplasmic side of the membrane; it reads NLFKRSTE. Residues 461 to 481 form a helical membrane-spanning segment; it reads EIIALFISITFVLDAVKGMVK. The Extracellular segment spans residues 482-542; it reads IFGKYYYGHH…SSPGSTHSGQ (61 aa). N-linked (GlcNAc...) asparagine glycosylation is found at asparagine 511 and asparagine 519. The helical transmembrane segment at 543-564 threads the bilayer; that stretch reads ATAVLSLLIMLGTLWLGYTLYQ. Topologically, residues 565–577 are cytoplasmic; sequence FKKSPYLHPCVRE. Residues 578-599 traverse the membrane as a helical segment; that stretch reads TLSDCALPIAVLSFSLIGSYGF. At 600–627 the chain is on the extracellular side; it reads QEIEMSKFRYNPSESLFEVAQIHSLSFK. A helical transmembrane segment spans residues 628–645; the sequence is AIGSAMGLGFLLSLLFFI. The Cytoplasmic segment spans residues 646–670; that stretch reads EQNLVAALVNAPENRLVKGTAYHWD. The chain crosses the membrane as a helical span at residues 671-691; sequence LLLLAIINTGLSLFGLPWIHA. Residues 692–721 are Extracellular-facing; that stretch reads AYPHSPLHVRALALVEERVENGHIYETIVD. Residues 722–746 traverse the membrane as a helical segment; the sequence is VKETRLTALGASVLVGLSLLLLPFP. At 747–752 the chain is on the cytoplasmic side; the sequence is LQWIPK. Residues 753-770 traverse the membrane as a helical segment; the sequence is PVLYGLFLYIALTSLDGN. Residues 771–774 are Extracellular-facing; it reads QLFS. A helical membrane pass occupies residues 775–797; sequence RVALLLKEQTSYPPTHYIRRVPQ. Over 798 to 802 the chain is Cytoplasmic; it reads RKIHY. Residues 803–819 traverse the membrane as a helical segment; it reads FTGLQILQLLLLCAFGM. Residues 820 to 823 are Extracellular-facing; it reads SSLP. Residues 824–844 form a helical membrane-spanning segment; sequence YMKMVFPLIMIAMIPIRYNLL. The Cytoplasmic segment spans residues 845 to 862; it reads PRIIEAKYLDVMDAEHRP.

It belongs to the anion exchanger (TC 2.A.31) family. As to quaternary structure, homodimer. Glycosylated. In terms of tissue distribution, expressed in the endothelial cells of the cornea. In the inner ear, is located in fibrocytes underlying the stria vascularis. In the kidney, is expressed in the thin descending limb of Henle loop.

The protein resides in the cell membrane. The protein localises to the basolateral cell membrane. It catalyses the reaction tetrahydroxoborate(in) + 2 Na(+)(in) = tetrahydroxoborate(out) + 2 Na(+)(out). Functionally, multifunctional transporter with an impact in cell morphology and differentiation. In the presence of borate B(OH)4(-), acts as a voltage-dependent electrogenic Na(+)-coupled B(OH)4(-) cotransporter controlling boron homeostasis. At early stages of stem cell differentiation, participates in synergy with ITGA5-ITGB1 and ITGAV-ITGB3 integrins and BMPR1A to promote cell adhesion and contractility that drives differentiation toward osteogenic commitment while inhibiting adipogenesis. In the absence of B(OH)4(-), acts as a Na(+)-coupled OH(-) or H(+) permeable channel with implications in cellular redox balance. Regulates the oxidative stress response in corneal endothelium by enhancing antioxidant defenses and protecting cells from reactive oxygen species. In response to hypo-osmotic challenge, also acts as water permeable channel at the basolateral cell membrane of corneal endothelial cells and facilitates transendothelial fluid reabsorption in the aqueous humor. In the presence of ammonia, acts as an electrogenic NH3/H(+) cotransporter and may play a role in ammonia transport and reabsorption in renal Henle's loop epithelium. The polypeptide is Solute carrier family 4 member 11 (Slc4a11) (Mus musculus (Mouse)).